We begin with the raw amino-acid sequence, 316 residues long: Olfactory receptor 2AG1 (316 aa).

At Met-1–Glu-25 the chain is on the extracellular side. Asn-5 and Asn-19 each carry an N-linked (GlcNAc...) asparagine glycan. Residues Leu-26–Ile-49 traverse the membrane as a helical segment. Over Thr-50–Met-57 the chain is Cytoplasmic. The chain crosses the membrane as a helical span at residues Pro-58 to Pro-79. Over Lys-80–Gln-100 the chain is Extracellular. Cys-97 and Cys-189 form a disulfide bridge. Residues Met-101–Tyr-120 form a helical membrane-spanning segment. At Asp-121–Arg-139 the chain is on the cytoplasmic side. The helical transmembrane segment at Ala-140–Ile-158 threads the bilayer. The Extracellular portion of the chain corresponds to Tyr-159–Tyr-195. A helical transmembrane segment spans residues Glu-196–Thr-219. The Cytoplasmic portion of the chain corresponds to Gln-220–Lys-236. A helical transmembrane segment spans residues Ala-237 to Tyr-259. Residues Val-260 to Asn-272 lie on the Extracellular side of the membrane. The helical transmembrane segment at Ile-273 to Leu-292 threads the bilayer. Residues Arg-293 to Leu-316 are Cytoplasmic-facing.

Belongs to the G-protein coupled receptor 1 family.

Its subcellular location is the cell membrane. Functionally, odorant receptor. The protein is Olfactory receptor 2AG1 (OR2AG1) of Homo sapiens (Human).